Reading from the N-terminus, the 1963-residue chain is Immunoglobulin A1 protease (1963 aa).

Residues 1–36 (MEKYFGEKQERFSFRKLSVGLVSATISSLFFMSVLA) form the signal peptide. Residues 37–99 (SSSVDAQETA…QNQLAELPNT (63 aa)) constitute a propeptide that is removed on maturation. The LPXTG sorting signal signature appears at 96–100 (LPNTG). Thr99 carries the pentaglycyl murein peptidoglycan amidated threonine modification. Helical transmembrane passes span 106 to 125 (QALV…FAVS) and 132 to 154 (KTVL…VHAL). The Extracellular segment spans residues 155-1963 (ENHLLLNYNT…FRSSIFENKK (1809 aa)). Positions 253-305 (KPFSTELINPRKEEKQSSDSQEQLAEHKNLETKKEEKISPKEKTGVNTLNPQD) are disordered. Positions 276 to 296 (LAEHKNLETKKEEKISPKEKT) are enriched in basic and acidic residues. The G5 domain occupies 314–393 (KPELLYREET…PRIVEKGTKK (80 aa)). Residues 402-681 (ETGVEHKDVQ…GQTEPEKKLE (280 aa)) form a disordered region. 3 tandem repeats follow at residues 419–435 (AIQP…KGEP), 436–452 (EVQP…KGET), and 453–469 (EVQP…KGEP). The segment at 419–469 (AIQPELPEAVVSDKGEPEVQPTLPEAVVTDKGETEVQPESPDTVVSDKGEP) is 3 X 17 AA approximate tandem repeats. Positions 485–511 (VKPETPVEKTKEQGPEKTEEVPVKPTE) are enriched in basic and acidic residues. 2 stretches are compositionally biased toward polar residues: residues 516-529 (NPNE…SIQE) and 538-572 (EEST…SVGE). Residues 574–591 (NKPEHNDSKNENSEKTVE) are compositionally biased toward basic and acidic residues. Polar residues-rich tracts occupy residues 618–639 (EETQ…SNKP) and 648–674 (ESNQ…NGQT). His1604 serves as a coordination point for Zn(2+). The active site involves Glu1605. Zn(2+) contacts are provided by His1608 and Glu1628.

Belongs to the peptidase M26 family. The cofactor is Zn(2+). The Gram-positive cell-wall anchor motif LPXTG is located in the N-terminal part, in contrast to such motifs in other known streptococcal and staphylococcal proteins. The protease could be cleaved by the sortase and anchored in the membrane via the two potential N-terminal transmembrane domains, whereas the propeptide located prior to the LPXTG motif would remain attached to the cell wall peptidoglycan by an amide bond.

It is found in the secreted. The protein resides in the cell wall. Its subcellular location is the membrane. The enzyme catalyses Cleavage of Pro-|-Thr bond in the hinge region of the heavy chain of human IgA.. Functionally, zinc metalloproteinase which cleaves human immunoglobulin A1 (IgA1) in the hinge region. In Streptococcus pneumoniae (strain ATCC BAA-255 / R6), this protein is Immunoglobulin A1 protease (iga).